The following is a 307-amino-acid chain: Oxygen-dependent coproporphyrinogen-III oxidase (307 aa).

Ser-99 contacts substrate. Residues His-103 and His-113 each coordinate a divalent metal cation. His-113 (proton donor) is an active-site residue. A substrate-binding site is contributed by Asn-115 to Arg-117. Positions 152 and 182 each coordinate a divalent metal cation. The tract at residues Tyr-247–Arg-282 is important for dimerization. Position 265 to 267 (Gly-265 to Arg-267) interacts with substrate.

This sequence belongs to the aerobic coproporphyrinogen-III oxidase family. In terms of assembly, homodimer. The cofactor is a divalent metal cation.

It is found in the cytoplasm. The enzyme catalyses coproporphyrinogen III + O2 + 2 H(+) = protoporphyrinogen IX + 2 CO2 + 2 H2O. Its pathway is porphyrin-containing compound metabolism; protoporphyrin-IX biosynthesis; protoporphyrinogen-IX from coproporphyrinogen-III (O2 route): step 1/1. Functionally, involved in the heme biosynthesis. Catalyzes the aerobic oxidative decarboxylation of propionate groups of rings A and B of coproporphyrinogen-III to yield the vinyl groups in protoporphyrinogen-IX. This is Oxygen-dependent coproporphyrinogen-III oxidase from Burkholderia multivorans (strain ATCC 17616 / 249).